We begin with the raw amino-acid sequence, 167 residues long: G/U mismatch-specific DNA glycosylase (167 aa).

This sequence belongs to the uracil-DNA glycosylase (UDG) superfamily. TDG/mug family. As to quaternary structure, binds DNA as a monomer.

Its subcellular location is the cytoplasm. The enzyme catalyses Specifically hydrolyzes mismatched double-stranded DNA and polynucleotides, releasing free uracil.. In terms of biological role, excises ethenocytosine and uracil, which can arise by alkylation or deamination of cytosine, respectively, from the corresponding mispairs with guanine in ds-DNA. It is capable of hydrolyzing the carbon-nitrogen bond between the sugar-phosphate backbone of the DNA and the mispaired base. The complementary strand guanine functions in substrate recognition. Required for DNA damage lesion repair in stationary-phase cells. In Pectobacterium atrosepticum (strain SCRI 1043 / ATCC BAA-672) (Erwinia carotovora subsp. atroseptica), this protein is G/U mismatch-specific DNA glycosylase.